A 238-amino-acid polypeptide reads, in one-letter code: Peptidyl-tRNA hydrolase (238 aa).

Tyr-14 provides a ligand contact to tRNA. His-19 functions as the Proton acceptor in the catalytic mechanism. Positions 64, 66, and 112 each coordinate tRNA. The segment at 202–225 (PAAQSHIHQARNSAQPKKLPETGP) is disordered. Over residues 207–216 (HIHQARNSAQ) the composition is skewed to polar residues.

Belongs to the PTH family. Monomer.

It is found in the cytoplasm. The enzyme catalyses an N-acyl-L-alpha-aminoacyl-tRNA + H2O = an N-acyl-L-amino acid + a tRNA + H(+). Functionally, hydrolyzes ribosome-free peptidyl-tRNAs (with 1 or more amino acids incorporated), which drop off the ribosome during protein synthesis, or as a result of ribosome stalling. In terms of biological role, catalyzes the release of premature peptidyl moieties from peptidyl-tRNA molecules trapped in stalled 50S ribosomal subunits, and thus maintains levels of free tRNAs and 50S ribosomes. The polypeptide is Peptidyl-tRNA hydrolase (Agrobacterium fabrum (strain C58 / ATCC 33970) (Agrobacterium tumefaciens (strain C58))).